A 196-amino-acid polypeptide reads, in one-letter code: Pro-FMRFamide-related neuropeptide VF (196 aa).

Residues 1 to 21 (MEIISLKRFILLMLATSSLLT) form the signal peptide. Residues 22 to 57 (SNIFCTDESRMPNLYSKKNYDKYSEPRGDLGWEKER) constitute a propeptide that is removed on maturation. Residue Phe-92 is modified to Phenylalanine amide. 2 consecutive propeptides follow at residues 95–99 (NMEEE) and 115–121 (NREDSLS). Phe-131 carries the post-translational modification Phenylalanine amide. A propeptide spanning residues 134 to 196 (TTTAKSITKT…IDDAELKQEK (63 aa)) is cleaved from the precursor.

The protein belongs to the FARP (FMRFamide related peptide) family.

The protein localises to the secreted. In terms of biological role, efficiently inhibits forskolin-induced production of cAMP. Acts as a potent negative regulator of gonadotropin synthesis and secretion. Induces secretion of prolactin. Functionally, efficiently inhibits forskolin-induced production of cAMP. Blocks morphine-induced analgesia. Shows no inhibitory activity of forskolin-induced production of cAMP. This chain is Pro-FMRFamide-related neuropeptide VF (NPVF), found in Bos taurus (Bovine).